The sequence spans 124 residues: UPF0382 membrane protein HI_1073 (124 aa).

3 helical membrane-spanning segments follow: residues 6 to 26 (LTLV…AAHG), 70 to 90 (SMSS…ALAF), and 95 to 115 (VIVW…ISLA).

The protein belongs to the UPF0382 family.

The protein localises to the cell membrane. This is UPF0382 membrane protein HI_1073 from Haemophilus influenzae (strain ATCC 51907 / DSM 11121 / KW20 / Rd).